Here is a 456-residue protein sequence, read N- to C-terminus: Adenylosuccinate lyase (456 aa).

Residues 15 to 16 (RY), 90 to 92 (NHD), and 122 to 123 (TS) contribute to the N(6)-(1,2-dicarboxyethyl)-AMP site. The active-site Proton donor/acceptor is H171. Q247 is a binding site for N(6)-(1,2-dicarboxyethyl)-AMP. The active-site Proton donor/acceptor is the S295. N(6)-(1,2-dicarboxyethyl)-AMP contacts are provided by residues S296, 301–303 (KVN), N309, R335, and 340–344 (STVLR).

Belongs to the lyase 1 family. Adenylosuccinate lyase subfamily. Homotetramer. Residues from neighboring subunits contribute catalytic and substrate-binding residues to each active site.

The catalysed reaction is N(6)-(1,2-dicarboxyethyl)-AMP = fumarate + AMP. The enzyme catalyses (2S)-2-[5-amino-1-(5-phospho-beta-D-ribosyl)imidazole-4-carboxamido]succinate = 5-amino-1-(5-phospho-beta-D-ribosyl)imidazole-4-carboxamide + fumarate. It functions in the pathway purine metabolism; AMP biosynthesis via de novo pathway; AMP from IMP: step 2/2. Its pathway is purine metabolism; IMP biosynthesis via de novo pathway; 5-amino-1-(5-phospho-D-ribosyl)imidazole-4-carboxamide from 5-amino-1-(5-phospho-D-ribosyl)imidazole-4-carboxylate: step 2/2. Its function is as follows. Catalyzes two reactions in de novo purine nucleotide biosynthesis. Catalyzes the breakdown of 5-aminoimidazole- (N-succinylocarboxamide) ribotide (SAICAR or 2-[5-amino-1-(5-phospho-beta-D-ribosyl)imidazole-4-carboxamido]succinate) to 5-aminoimidazole-4-carboxamide ribotide (AICAR or 5-amino-1-(5-phospho-beta-D-ribosyl)imidazole-4-carboxamide) and fumarate, and of adenylosuccinate (ADS or N(6)-(1,2-dicarboxyethyl)-AMP) to adenosine monophosphate (AMP) and fumarate. This is Adenylosuccinate lyase (purB) from Legionella pneumophila subsp. pneumophila (strain Philadelphia 1 / ATCC 33152 / DSM 7513).